Reading from the N-terminus, the 105-residue chain is Ferredoxin-2 (105 aa).

Residues 4–94 (YQVEVIYQGQ…DLKIETHKED (91 aa)) form the 2Fe-2S ferredoxin-type domain. Positions 40, 45, 48, and 78 each coordinate [2Fe-2S] cluster.

It belongs to the 2Fe2S plant-type ferredoxin family. In terms of assembly, forms a complex with heterodimeric ferredoxin-thioredoxin reductase (FTR) and thioredoxin. It depends on [2Fe-2S] cluster as a cofactor.

Its function is as follows. Ferredoxins are iron-sulfur proteins that transfer electrons in a wide variety of metabolic reactions. The sequence is that of Ferredoxin-2 (petF2) from Synechococcus sp. (strain ATCC 27144 / PCC 6301 / SAUG 1402/1) (Anacystis nidulans).